The primary structure comprises 315 residues: Acetaldehyde dehydrogenase 2 (315 aa).

NAD(+) is bound at residue 13-16 (SGNI). Catalysis depends on C131, which acts as the Acyl-thioester intermediate. Residues 162–170 (SAGPGTRAN) and N290 contribute to the NAD(+) site.

It belongs to the acetaldehyde dehydrogenase family.

It carries out the reaction acetaldehyde + NAD(+) + CoA = acetyl-CoA + NADH + H(+). The chain is Acetaldehyde dehydrogenase 2 from Pseudomonas putida (strain W619).